We begin with the raw amino-acid sequence, 446 residues long: ATP synthase subunit b-delta (446 aa).

Residues 1 to 168 (MSTFIGQLFG…PATADVDYPL (168 aa)) are ATP synthase subunit b. Residues 4-24 (FIGQLFGFAVIVYLVWRFIVP) form a helical membrane-spanning segment. Residues 169-446 (LAKMRSASRR…LAAAEARLPD (278 aa)) form an ATP synthase subunit delta region.

In the N-terminal section; belongs to the ATPase B chain family. This sequence in the C-terminal section; belongs to the ATPase delta chain family. F-type ATPases have 2 components, F(1) - the catalytic core - and F(0) - the membrane proton channel. F(1) has five subunits: alpha(3), beta(3), gamma(1), delta(1), epsilon(1). F(0) has three main subunits: a(1), b(2) and c(10-14). The alpha and beta chains form an alternating ring which encloses part of the gamma chain. F(1) is attached to F(0) by a central stalk formed by the gamma and epsilon chains, while a peripheral stalk is formed by the delta and b chains.

The protein localises to the cell membrane. Functionally, f(1)F(0) ATP synthase produces ATP from ADP in the presence of a proton or sodium gradient. F-type ATPases consist of two structural domains, F(1) containing the extramembraneous catalytic core and F(0) containing the membrane proton channel, linked together by a central stalk and a peripheral stalk. During catalysis, ATP synthesis in the catalytic domain of F(1) is coupled via a rotary mechanism of the central stalk subunits to proton translocation. In terms of biological role, this fusion protein includes a component of the F(0) channel (subunit b) and of the F(1) subunit (subunit delta). Two copies of subunit b and one of delta together form the peripheral 'stator' stalk which links F(1) to F(0). The sequence is that of ATP synthase subunit b-delta (atpFH) from Mycobacterium tuberculosis (strain CDC 1551 / Oshkosh).